Here is a 121-residue protein sequence, read N- to C-terminus: Small ribosomal subunit protein uS13 (121 aa).

A disordered region spans residues 96–121; the sequence is PVRGQNTKNNARTRKGKAVAIAGKKK. Over residues 106–121 the composition is skewed to basic residues; the sequence is ARTRKGKAVAIAGKKK.

It belongs to the universal ribosomal protein uS13 family. As to quaternary structure, part of the 30S ribosomal subunit. Forms a loose heterodimer with protein S19. Forms two bridges to the 50S subunit in the 70S ribosome.

Located at the top of the head of the 30S subunit, it contacts several helices of the 16S rRNA. In the 70S ribosome it contacts the 23S rRNA (bridge B1a) and protein L5 of the 50S subunit (bridge B1b), connecting the 2 subunits; these bridges are implicated in subunit movement. Contacts the tRNAs in the A and P-sites. In Streptococcus suis (strain 05ZYH33), this protein is Small ribosomal subunit protein uS13.